We begin with the raw amino-acid sequence, 90 residues long: Co-chaperonin GroES (90 aa).

This sequence belongs to the GroES chaperonin family. Heptamer of 7 subunits arranged in a ring. Interacts with the chaperonin GroEL.

The protein localises to the cytoplasm. Together with the chaperonin GroEL, plays an essential role in assisting protein folding. The GroEL-GroES system forms a nano-cage that allows encapsulation of the non-native substrate proteins and provides a physical environment optimized to promote and accelerate protein folding. GroES binds to the apical surface of the GroEL ring, thereby capping the opening of the GroEL channel. This chain is Co-chaperonin GroES, found in Thermosipho africanus (strain TCF52B).